A 104-amino-acid polypeptide reads, in one-letter code: Iron-sulfur cluster assembly protein CyaY (104 aa).

It belongs to the frataxin family.

Involved in iron-sulfur (Fe-S) cluster assembly. May act as a regulator of Fe-S biogenesis. The chain is Iron-sulfur cluster assembly protein CyaY from Vibrio atlanticus (strain LGP32) (Vibrio splendidus (strain Mel32)).